The primary structure comprises 225 residues: 2-C-methyl-D-erythritol 4-phosphate cytidylyltransferase (225 aa).

This sequence belongs to the IspD/TarI cytidylyltransferase family. IspD subfamily.

The catalysed reaction is 2-C-methyl-D-erythritol 4-phosphate + CTP + H(+) = 4-CDP-2-C-methyl-D-erythritol + diphosphate. It participates in isoprenoid biosynthesis; isopentenyl diphosphate biosynthesis via DXP pathway; isopentenyl diphosphate from 1-deoxy-D-xylulose 5-phosphate: step 2/6. Its function is as follows. Catalyzes the formation of 4-diphosphocytidyl-2-C-methyl-D-erythritol from CTP and 2-C-methyl-D-erythritol 4-phosphate (MEP). This Haemophilus influenzae (strain 86-028NP) protein is 2-C-methyl-D-erythritol 4-phosphate cytidylyltransferase.